Reading from the N-terminus, the 1358-residue chain is DNA-directed RNA polymerase subunit beta (1358 aa).

Belongs to the RNA polymerase beta chain family. In terms of assembly, the RNAP catalytic core consists of 2 alpha, 1 beta, 1 beta' and 1 omega subunit. When a sigma factor is associated with the core the holoenzyme is formed, which can initiate transcription.

It catalyses the reaction RNA(n) + a ribonucleoside 5'-triphosphate = RNA(n+1) + diphosphate. DNA-dependent RNA polymerase catalyzes the transcription of DNA into RNA using the four ribonucleoside triphosphates as substrates. This chain is DNA-directed RNA polymerase subunit beta, found in Francisella tularensis subsp. holarctica (strain LVS).